We begin with the raw amino-acid sequence, 309 residues long: Bombesin receptor-activated protein C6orf89 homolog (309 aa).

The Cytoplasmic segment spans residues 1–59; that stretch reads MGSSLSEPCIYDKLSESIDILRQSGYRYGMSEREIEKFIKQVLETNEPRREPPQFPILR. Residues 60–80 form a helical membrane-spanning segment; that stretch reads ATVKFVVAVGVVLMAVLVFTY. Residues 81–309 are Extracellular-facing; sequence PQSPVLMGSV…QDVQCDSAVL (229 aa).

As to quaternary structure, homodimer.

The protein localises to the golgi apparatus membrane. It is found in the cytoplasm. In terms of biological role, exhibits histone deacetylase (HDAC) enhancer properties. May play a role in progression through the cell cycle. This chain is Bombesin receptor-activated protein C6orf89 homolog, found in Danio rerio (Zebrafish).